The sequence spans 404 residues: Keratin, type I microfibrillar, 47.6 kDa (404 aa).

Positions 1-56 are head; the sequence is MSFNFCLPNLSFRSSCSSRPCVPSSCCGTTLPGACNIPASVGSCNWFCEGSFNGNE. An IF rod domain is found at 56 to 367; that stretch reads EKETMQFLND…GLLDSEDCKL (312 aa). A coil 1A region spans residues 57 to 91; it reads KETMQFLNDRLASYLEKVRQLERENAELERRILER. Positions 92–102 are linker 1; sequence SQQQEPLVCPN. Residues 103-203 are coil 1B; sequence YQSYFRTIEE…HEQEVNTLRS (101 aa). Residues 204–219 are linker 12; the sequence is QLGDRLNVEVDAAPTV. Positions 220–363 are coil 2; it reads DLNHVLNETR…NTYRGLLDSE (144 aa). The tail stretch occupies residues 364–404; that stretch reads DCKLPCNPCATTNTCGKPIGPCISNPCVSRTRCGPCNTFVH.

Belongs to the intermediate filament family.

In terms of biological role, wool microfibrillar keratin. This Ovis aries (Sheep) protein is Keratin, type I microfibrillar, 47.6 kDa.